We begin with the raw amino-acid sequence, 433 residues long: tRNA modification GTPase MnmE (433 aa).

(6S)-5-formyl-5,6,7,8-tetrahydrofolate contacts are provided by Arg-24, Glu-86, and Lys-125. The 146-residue stretch at 218–363 (GARLALIGAP…LKEALREALL (146 aa)) folds into the TrmE-type G domain. Residue Asn-228 coordinates K(+). Residues 228-233 (NAGKSS), 247-253 (SPIPGTT), and 272-275 (DTAG) contribute to the GTP site. A Mg(2+)-binding site is contributed by Ser-232. K(+) is bound by residues Ser-247, Ile-249, and Thr-252. Residue Thr-253 participates in Mg(2+) binding. (6S)-5-formyl-5,6,7,8-tetrahydrofolate is bound at residue Lys-433.

Belongs to the TRAFAC class TrmE-Era-EngA-EngB-Septin-like GTPase superfamily. TrmE GTPase family. Homodimer. Heterotetramer of two MnmE and two MnmG subunits. K(+) is required as a cofactor.

The protein localises to the cytoplasm. Exhibits a very high intrinsic GTPase hydrolysis rate. Involved in the addition of a carboxymethylaminomethyl (cmnm) group at the wobble position (U34) of certain tRNAs, forming tRNA-cmnm(5)s(2)U34. The sequence is that of tRNA modification GTPase MnmE from Thermus thermophilus (strain ATCC BAA-163 / DSM 7039 / HB27).